Here is a 497-residue protein sequence, read N- to C-terminus: L-carnitine dehydrogenase/betainyl-CoA thioesterase (497 aa).

Residues 1–335 (MSFITKAACV…AKLWANARKP (335 aa)) form an L-carnitine dehydrogenase region. 11 to 16 (GGGVIG) provides a ligand contact to NAD(+). Residues 330-335 (ANARKP) form an important for dehydrogenase activity region. The tract at residues 336–497 (EADLGDVKPL…AGRFVGQKRA (162 aa)) is betainyl-CoA thioesterase.

The protein in the N-terminal section; belongs to the 3-hydroxyacyl-CoA dehydrogenase family. L-carnitine dehydrogenase subfamily. This sequence in the C-terminal section; belongs to the betainyl-CoA thioesterase family. Homodimer.

It is found in the cytoplasm. The enzyme catalyses carnitine + NAD(+) = 3-dehydrocarnitine + NADH + H(+). It catalyses the reaction N,N,N-trimethylglycyl-CoA + H2O = glycine betaine + CoA + H(+). It participates in amine and polyamine metabolism; carnitine metabolism. Catalyzes the NAD(+)-dependent oxidation of L-carnitine to 3-dehydrocarnitine. Probably also catalyzes the cleavage of betainyl-CoA (N,N,N-trimethylglycyl-CoA) into glycine betaine and coenzyme A. Despite a high similarity to 3-hydroxyacyl-CoA dehydrogenases, cannot dehydrogenate 3-hydroxybutylate and 3-hydroxybutyl-CoA. Is probably involved in a L-carnitine degradation pathway that allows Rhizobium sp. YS-240 to grow on L-carnitine as the sole source of carbon and nitrogen. The protein is L-carnitine dehydrogenase/betainyl-CoA thioesterase of Rhizobium sp.